Reading from the N-terminus, the 303-residue chain is MTTASTTPNSDTSNLHEVAPDDPIRERIRQAAQNVREQTPLAQSFTNFVTINLVANAQLAAGGTAAMSFLPNDVTSLASSCGATYINVGTLLPFYRDALQEISEHLSRHGCKWVLDPVAAGVGVARTEILKGFKDYPPTVIRANASEALVLHDMWQLGDAAGTDEHNGPAGVEAADSVDAAITAATDLAAYLALHSPTHTGAVAVSGEVDLVTDGRLVYRLPGGSAMMTKITGAGCSLGGVTATYLAVADALVASLAASMLYNVSSGAAERASHGPGSFQTAFLDALWNVTPEEIASAPLYLA.

Positions 1 to 15 (MTTASTTPNSDTSNL) are enriched in polar residues. Residues 1 to 23 (MTTASTTPNSDTSNLHEVAPDDP) form a disordered region. A substrate-binding site is contributed by Met-67. Arg-142 and Ser-206 together coordinate ATP. Residue Gly-233 coordinates substrate.

Belongs to the Thz kinase family. It depends on Mg(2+) as a cofactor.

The catalysed reaction is 5-(2-hydroxyethyl)-4-methylthiazole + ATP = 4-methyl-5-(2-phosphooxyethyl)-thiazole + ADP + H(+). The protein operates within cofactor biosynthesis; thiamine diphosphate biosynthesis; 4-methyl-5-(2-phosphoethyl)-thiazole from 5-(2-hydroxyethyl)-4-methylthiazole: step 1/1. In terms of biological role, catalyzes the phosphorylation of the hydroxyl group of 4-methyl-5-beta-hydroxyethylthiazole (THZ). The sequence is that of Hydroxyethylthiazole kinase from Bifidobacterium animalis subsp. lactis (strain AD011).